The following is a 222-amino-acid chain: Glutathione S-transferase A3 (222 aa).

The residue at position 2 (Ala2) is an N-acetylalanine. A GST N-terminal domain is found at 3-83 (GKPKLHYFNG…YIASKYNLYG (81 aa)). An N6-succinyllysine modification is found at Lys4. Glutathione contacts are provided by residues Tyr9, Arg45, 54–55 (QV), and 67–68 (QT). The GST C-terminal domain maps to 85–207 (DIKERALIDM…LQPGSPRKPP (123 aa)).

It belongs to the GST superfamily. Alpha family. As to quaternary structure, homodimer.

Its subcellular location is the cytoplasm. It catalyses the reaction RX + glutathione = an S-substituted glutathione + a halide anion + H(+). The enzyme catalyses androst-5-ene-3,17-dione = androst-4-ene-3,17-dione. The catalysed reaction is pregn-5-ene-3,20-dione = progesterone. In terms of biological role, conjugation of reduced glutathione to a wide number of exogenous and endogenous hydrophobic electrophiles. Catalyzes isomerization reactions that contribute to the biosynthesis of steroid hormones. Efficiently catalyze obligatory double-bond isomerizations of delta(5)-androstene-3,17-dione and delta(5)-pregnene-3,20-dione, precursors to testosterone and progesterone, respectively. Has substantial activity toward aflatoxin B1-8,9-epoxide. In Homo sapiens (Human), this protein is Glutathione S-transferase A3.